The chain runs to 1041 residues: Histone deacetylase complex subunit SAP130-B (1041 aa).

Disordered regions lie at residues 1–62 (MSSQ…QEPV), 111–131 (KSTMPSRPIAPAPPSALSAVP), 572–592 (TNQGVQTSSVSSQQASSEPKS), 614–769 (TPAG…PSGA), and 806–852 (VLAN…DEER). Over residues 18–30 (VSNSGASVGQNVQ) the composition is skewed to polar residues. A compositionally biased stretch (basic and acidic residues) spans 33–42 (EVAREIDVQS). Low complexity predominate over residues 576 to 592 (VQTSSVSSQQASSEPKS). Polar residues predominate over residues 614-641 (TPAGTTVMQSHSQSPGIGSSPAQGSSPR). Residues 707-728 (PGAADQPSAAASLPSSHHPTAA) are compositionally biased toward low complexity.

The protein belongs to the SAP130 family.

It localises to the nucleus. In terms of biological role, acts as a transcriptional repressor. The sequence is that of Histone deacetylase complex subunit SAP130-B (sap130-b) from Xenopus laevis (African clawed frog).